The chain runs to 372 residues: Putative glutamate--cysteine ligase 2 (372 aa).

This sequence belongs to the glutamate--cysteine ligase type 2 family. YbdK subfamily.

It carries out the reaction L-cysteine + L-glutamate + ATP = gamma-L-glutamyl-L-cysteine + ADP + phosphate + H(+). In terms of biological role, ATP-dependent carboxylate-amine ligase which exhibits weak glutamate--cysteine ligase activity. In Gloeobacter violaceus (strain ATCC 29082 / PCC 7421), this protein is Putative glutamate--cysteine ligase 2.